The sequence spans 127 residues: MEEITMALNIENIIAEIKEASILELNDLVKAIEEEFGVTAAAPVAAAADGAADAGAAKDSFDVELTSAGDKKVGVIKVVREITGEGLKEAKAIVDGAPSVIKEGVAAAEAEEIKAKLEEAGASVTLK.

It belongs to the bacterial ribosomal protein bL12 family. In terms of assembly, homodimer. Part of the ribosomal stalk of the 50S ribosomal subunit. Forms a multimeric L10(L12)X complex, where L10 forms an elongated spine to which 2 to 4 L12 dimers bind in a sequential fashion. Binds GTP-bound translation factors.

In terms of biological role, forms part of the ribosomal stalk which helps the ribosome interact with GTP-bound translation factors. Is thus essential for accurate translation. In Streptococcus thermophilus (strain CNRZ 1066), this protein is Large ribosomal subunit protein bL12.